The following is an 88-amino-acid chain: Exodeoxyribonuclease 7 small subunit (88 aa).

The tract at residues 69–88 (DPMRPDDGEPFDPSIVSTSQ) is disordered.

This sequence belongs to the XseB family. In terms of assembly, heterooligomer composed of large and small subunits.

It is found in the cytoplasm. The catalysed reaction is Exonucleolytic cleavage in either 5'- to 3'- or 3'- to 5'-direction to yield nucleoside 5'-phosphates.. In terms of biological role, bidirectionally degrades single-stranded DNA into large acid-insoluble oligonucleotides, which are then degraded further into small acid-soluble oligonucleotides. The chain is Exodeoxyribonuclease 7 small subunit from Xylella fastidiosa (strain M12).